A 189-amino-acid polypeptide reads, in one-letter code: Lumazine protein (189 aa).

Lumazine-binding repeat units lie at residues Met1–Gly96 and Ala97–Trp189.

It depends on 6,7-dimethyl-8-(1-D-ribityl)lumazine as a cofactor.

Antenna protein that modulates the color of the bioluminescence emission of the luciferase. In the presence of LumP, luciferase emission is shifted to higher energy values (shorter wavelength). The protein is Lumazine protein (luxL) of Photobacterium phosphoreum.